The chain runs to 424 residues: Protein SamB (424 aa).

Residues 2–189 (FALADVNSFY…QPVEEIWGVG (188 aa)) enclose the UmuC domain.

It belongs to the DNA polymerase type-Y family.

Its function is as follows. Involved in UV protection and mutation. In Salmonella typhimurium, this protein is Protein SamB (samB).